Consider the following 141-residue polypeptide: Hemoglobin subunit alpha (141 aa).

The Globin domain occupies 1-141 (VLSAADKGHV…VSTVLTSKYR (141 aa)). Residue Ser3 is modified to Phosphoserine. 2 positions are modified to N6-succinyllysine: Lys7 and Lys11. Lys16 carries the N6-acetyllysine; alternate modification. Lys16 is subject to N6-succinyllysine; alternate. Tyr24 is subject to Phosphotyrosine. Position 35 is a phosphoserine (Ser35). N6-succinyllysine is present on Lys40. Phosphoserine is present on Ser49. His58 provides a ligand contact to O2. Position 87 (His87) interacts with heme b. Position 102 is a phosphoserine (Ser102). The residue at position 108 (Thr108) is a Phosphothreonine. Ser124 carries the post-translational modification Phosphoserine. Thr134 and Thr137 each carry phosphothreonine. Phosphoserine is present on Ser138.

This sequence belongs to the globin family. As to quaternary structure, heterotetramer of two alpha chains and two beta chains. As to expression, red blood cells.

In terms of biological role, involved in oxygen transport from the lung to the various peripheral tissues. Its function is as follows. Hemopressin acts as an antagonist peptide of the cannabinoid receptor CNR1. Hemopressin-binding efficiently blocks cannabinoid receptor CNR1 and subsequent signaling. In Macropus giganteus (Eastern gray kangaroo), this protein is Hemoglobin subunit alpha (HBA).